The following is a 431-amino-acid chain: Ribosomal protein uS12 methylthiotransferase RimO (431 aa).

In terms of domain architecture, MTTase N-terminal spans 4 to 120 (HKLFLLSLGC…ILAALGAAYH (117 aa)). C13, C49, C83, C144, C148, and C151 together coordinate [4Fe-4S] cluster. A Radical SAM core domain is found at 130–359 (LTPPHYTYLK…MELQESVSQD (230 aa)). In terms of domain architecture, TRAM spans 362-429 (RDFEGKEITV…PFDLVGEVIG (68 aa)).

This sequence belongs to the methylthiotransferase family. RimO subfamily. Requires [4Fe-4S] cluster as cofactor.

It is found in the cytoplasm. It carries out the reaction L-aspartate(89)-[ribosomal protein uS12]-hydrogen + (sulfur carrier)-SH + AH2 + 2 S-adenosyl-L-methionine = 3-methylsulfanyl-L-aspartate(89)-[ribosomal protein uS12]-hydrogen + (sulfur carrier)-H + 5'-deoxyadenosine + L-methionine + A + S-adenosyl-L-homocysteine + 2 H(+). Catalyzes the methylthiolation of an aspartic acid residue of ribosomal protein uS12. The polypeptide is Ribosomal protein uS12 methylthiotransferase RimO (Pelodictyon phaeoclathratiforme (strain DSM 5477 / BU-1)).